The primary structure comprises 239 residues: MGRAFEVRKASMAKTAAAKSKVYSRYGREIYMAAKAGTPDPETNQALKRVIERAKKEQVTADIIKRNIDKAKGGSDENYAEIRYEGFGPEGSLIIIECLTDNTNRTISDVRKLFNKAYGKLGVSGSVLHQFDHKAVFEVEAPENKLLEILLENDVDITDYEAEEGVVTIYAEPTEYGKIADVLKDNNLESKEEAIMFIPMQTMEIKDPEEQAKFDRLIEGLNELDDVKDVFHNVISSGE.

The protein belongs to the TACO1 family.

It localises to the cytoplasm. The sequence is that of Probable transcriptional regulatory protein ACL_0044 from Acholeplasma laidlawii (strain PG-8A).